The sequence spans 324 residues: NAC domain-containing protein 30 (324 aa).

In terms of domain architecture, NAC spans 9-158; that stretch reads MPPGFRFHPT…GWVVCRAFRK (150 aa). A DNA-binding region spans residues 109–164; that stretch reads IGMRKTLVYYKGRAPNGRKSDWIMHEYRLQNSELAPVQEEGWVVCRAFRKPIPNQR. Low complexity predominate over residues 232–244; the sequence is LPQLDSPSLSPSL. Residues 232-259 are disordered; that stretch reads LPQLDSPSLSPSLGTNKDQNESFEQEEE.

It belongs to the plant vascular related NAC-domain protein family. In terms of assembly, forms homodimer and heterodimers with other VND proteins (e.g. NAC037/VND1, NAC076/VND2 and NAC105/VND3) via their N-termini. Interacts with NAC083/VNI2. As to expression, expressed in developing protoxylems in roots and shoots. Detected in root protoxylem poles and in vessels of protoxylems, outermost metaxylems, inner metaxylems, shoots and hypocotyls. Expressed in roots, hypocotyls, cotyledons and leaves. Accumulates in the xylem but not in interfascicular fibers or pith cells in inflorescence stems. Present in developing vessels of the secondary xylem in roots undergoing secondary growth.

The protein resides in the nucleus. In terms of biological role, transcription activator that binds to the secondary wall NAC binding element (SNBE), 5'-(T/A)NN(C/T)(T/C/G)TNNNNNNNA(A/C)GN(A/C/T)(A/T)-3', in the promoter of target genes (e.g. genes involved in secondary wall biosynthesis, cell wall modification such as xylan accumulation, and programmed cell death). Involved in xylem formation in roots and shoots, especially regulating protoxylem vessel differentiation by promoting immature xylem vessel-specific genes expression. Can activate the expression of several genes including XCP1, MYB46, NAC010/SND3, MYB103, MYB58, MYB63, MYB83, KNAT7, ASL19 and ASL20. Functionally, required for the soilborne fungal pathogen Verticillium longisporum-induced transdifferentiation of chloroplast-containing bundle sheath cells to functional xylem elements leading to stunted growth, vein clearing, and leaf chloroses, as well as xylem hyperplasia within the vasculature of leaves, hypocotyls, and roots due to reinitiation of cambial activity and transdifferentiation of xylem parenchyma cells. This developmental reprogramming also mediates an increased drought stress tolerance. The polypeptide is NAC domain-containing protein 30 (Arabidopsis thaliana (Mouse-ear cress)).